Consider the following 186-residue polypeptide: ATP synthase subunit delta (186 aa).

Belongs to the ATPase delta chain family. F-type ATPases have 2 components, F(1) - the catalytic core - and F(0) - the membrane proton channel. F(1) has five subunits: alpha(3), beta(3), gamma(1), delta(1), epsilon(1). F(0) has three main subunits: a(1), b(2) and c(10-14). The alpha and beta chains form an alternating ring which encloses part of the gamma chain. F(1) is attached to F(0) by a central stalk formed by the gamma and epsilon chains, while a peripheral stalk is formed by the delta and b chains.

The protein resides in the cell inner membrane. Its function is as follows. F(1)F(0) ATP synthase produces ATP from ADP in the presence of a proton or sodium gradient. F-type ATPases consist of two structural domains, F(1) containing the extramembraneous catalytic core and F(0) containing the membrane proton channel, linked together by a central stalk and a peripheral stalk. During catalysis, ATP synthesis in the catalytic domain of F(1) is coupled via a rotary mechanism of the central stalk subunits to proton translocation. This protein is part of the stalk that links CF(0) to CF(1). It either transmits conformational changes from CF(0) to CF(1) or is implicated in proton conduction. This Brucella suis biovar 1 (strain 1330) protein is ATP synthase subunit delta.